The primary structure comprises 178 residues: MSRIGKQPISIPNGLDVSLKGSVLVFKKGNNTKELDTKGNVNIEVKDGNIIFTSKGDDRQSRAYWGTYRALANNVVVGLTTGFTKQLEINGVGYKAAAKGKVLELALGFSHPINYELPEGIEISVEKNIITIKGSDKQVVGQVAAEVRGFRPPEPYKGKGVKYAEERIIRKAGKTSKK.

It belongs to the universal ribosomal protein uL6 family. In terms of assembly, part of the 50S ribosomal subunit.

This protein binds to the 23S rRNA, and is important in its secondary structure. It is located near the subunit interface in the base of the L7/L12 stalk, and near the tRNA binding site of the peptidyltransferase center. In Campylobacter fetus subsp. fetus (strain 82-40), this protein is Large ribosomal subunit protein uL6.